Consider the following 149-residue polypeptide: MADQLTEEQIAEFKEAFSLFDKDGDGTITTKELGTVMRSLGQNPTEAELQDMINEVDADGNGTIDFPEFLTMMARKMKDTDSEEEIREAFRVFDKDGNGFISAAELRHVMTNLGEKLTDEEVDEMIREADVDGDGQVNYEEFVNMMTNK.

Position 2 is an N-acetylalanine (A2). EF-hand domains are found at residues 8 to 43, 44 to 79, 81 to 116, and 117 to 149; these read EQIAEFKEAFSLFDKDGDGTITTKELGTVMRSLGQN, PTEAELQDMINEVDADGNGTIDFPEFLTMMARKMKD, DSEEEIREAFRVFDKDGNGFISAAELRHVMTNLGEK, and LTDEEVDEMIREADVDGDGQVNYEEFVNMMTNK. Positions 21, 23, 25, 27, 32, 57, 59, 61, 63, 68, 94, 96, 98, and 105 each coordinate Ca(2+). Residue K116 is modified to N6,N6,N6-trimethyllysine. The Ca(2+) site is built by D130, D132, D134, Q136, and E141.

This sequence belongs to the calmodulin family.

Calmodulin mediates the control of a large number of enzymes, ion channels and other proteins by Ca(2+). Among the enzymes to be stimulated by the calmodulin-Ca(2+) complex are a number of protein kinases and phosphatases. The chain is Calmodulin from Ciona intestinalis (Transparent sea squirt).